Reading from the N-terminus, the 748-residue chain is Glucans biosynthesis glucosyltransferase H (748 aa).

7 helical membrane-spanning segments follow: residues 85–107 (LIVRRLFIFVGTALLTLAGGYGM), 127–149 (FLVLLAWVAFSFMSALAGFFVLL), 443–465 (GIGSYVTAPLWLLFLLVGLLISL), 494–516 (AWVFAATMGLLILPKLLAYLVLI), 529–551 (GRVLAGVVCEAFVAALLAPCMMI), 587–606 (LAGPTLCGLVLSVCAYSVSL), and 608–630 (LLLWMSPVVLGLLLSIPLGIMTS).

Belongs to the glycosyltransferase 2 family. OpgH subfamily.

It localises to the cell inner membrane. Its pathway is glycan metabolism; osmoregulated periplasmic glucan (OPG) biosynthesis. Its function is as follows. Involved in the biosynthesis of osmoregulated periplasmic glucans (OPGs). The polypeptide is Glucans biosynthesis glucosyltransferase H (Bradyrhizobium diazoefficiens (strain JCM 10833 / BCRC 13528 / IAM 13628 / NBRC 14792 / USDA 110)).